A 122-amino-acid chain; its full sequence is Large ribosomal subunit protein uL14 (122 aa).

It belongs to the universal ribosomal protein uL14 family. Part of the 50S ribosomal subunit. Forms a cluster with proteins L3 and L19. In the 70S ribosome, L14 and L19 interact and together make contacts with the 16S rRNA in bridges B5 and B8.

Its function is as follows. Binds to 23S rRNA. Forms part of two intersubunit bridges in the 70S ribosome. This is Large ribosomal subunit protein uL14 from Ralstonia nicotianae (strain ATCC BAA-1114 / GMI1000) (Ralstonia solanacearum).